A 1096-amino-acid polypeptide reads, in one-letter code: Pullulanase (1096 aa).

The first 19 residues, 1–19 (MLRYTCHALFLGSLVLLSG), serve as a signal peptide directing secretion. C20 carries the N-palmitoyl cysteine lipid modification. Residue C20 is the site of S-diacylglycerol cysteine attachment. The span at 24 to 34 (SSSSTSGSPGS) shows a compositional bias: low complexity. Positions 24 to 50 (SSSSTSGSPGSPGNPGNPGTPGTPDPQ) are disordered. The Nucleophile role is filled by D694. E723 acts as the Proton donor in catalysis. The tract at residues 1014 to 1044 (QAGRQSGQPCRRHRGGDQRRAGKPDAAGLRR) is disordered.

It belongs to the glycosyl hydrolase 13 family. Homotrimer.

Its subcellular location is the cell membrane. The enzyme catalyses Hydrolysis of (1-&gt;6)-alpha-D-glucosidic linkages in pullulan, amylopectin and glycogen, and in the alpha- and beta-limit dextrins of amylopectin and glycogen.. In Klebsiella aerogenes (Enterobacter aerogenes), this protein is Pullulanase (pulA).